The following is a 142-amino-acid chain: Large ribosomal subunit protein uL13 (142 aa).

The protein belongs to the universal ribosomal protein uL13 family. Part of the 50S ribosomal subunit.

This protein is one of the early assembly proteins of the 50S ribosomal subunit, although it is not seen to bind rRNA by itself. It is important during the early stages of 50S assembly. The sequence is that of Large ribosomal subunit protein uL13 from Vibrio atlanticus (strain LGP32) (Vibrio splendidus (strain Mel32)).